The primary structure comprises 411 residues: Heparan-sulfate 6-O-sulfotransferase 1 (411 aa).

The Cytoplasmic portion of the chain corresponds to 11 to 17; the sequence is MVERASK. A helical; Signal-anchor for type II membrane protein transmembrane segment spans residues 18 to 37; the sequence is FVLVVAGSVCFMLILYQYAG. Residues 38–411 are Lumenal-facing; that stretch reads PGLSLGAPGG…DYMSHIIEKW (374 aa). 93–101 serves as a coordination point for 3'-phosphoadenylyl sulfate; the sequence is HIQKTGGTT. Residues 123 to 124, arginine 140, tryptophan 145, and histidine 150 contribute to the substrate site; that span reads KK. The active-site Proton acceptor is histidine 150. 3'-phosphoadenylyl sulfate contacts are provided by arginine 185 and serine 193. Substrate is bound by residues histidine 197 and tryptophan 204. A glycan (N-linked (GlcNAc...) asparagine) is linked at asparagine 264. 317–319 contributes to the 3'-phosphoadenylyl sulfate binding site; the sequence is MQY. Asparagine 320 is a glycosylation site (N-linked (GlcNAc...) asparagine). 3'-phosphoadenylyl sulfate is bound at residue 323 to 324; the sequence is RA. Residues 352 to 387 adopt a coiled-coil conformation; the sequence is KDLFQQRYQYKRQLERREQRLRSREERLLHRAKEAL.

Belongs to the sulfotransferase 6 family. In terms of processing, N-glycosylated. Expressed in fetal brain.

It is found in the membrane. It carries out the reaction alpha-D-glucosaminyl-[heparan sulfate](n) + 3'-phosphoadenylyl sulfate = 6-sulfo-alpha-D-glucosaminyl-[heparan sulfate](n) + adenosine 3',5'-bisphosphate + H(+). 6-O-sulfation enzyme which catalyzes the transfer of sulfate from 3'-phosphoadenosine 5'-phosphosulfate (PAPS) to position 6 of the N-sulfoglucosamine residue (GlcNS) of heparan sulfate. Critical for normal neuronal development where it may play a role in neuron branching. May also play a role in limb development. May prefer iduronic acid. This Homo sapiens (Human) protein is Heparan-sulfate 6-O-sulfotransferase 1.